A 237-amino-acid chain; its full sequence is tRNA (guanine-N(1)-)-methyltransferase (237 aa).

Residues glycine 113 and 133 to 138 (VGDFIV) contribute to the S-adenosyl-L-methionine site.

Belongs to the RNA methyltransferase TrmD family. As to quaternary structure, homodimer.

The protein localises to the cytoplasm. It catalyses the reaction guanosine(37) in tRNA + S-adenosyl-L-methionine = N(1)-methylguanosine(37) in tRNA + S-adenosyl-L-homocysteine + H(+). Specifically methylates guanosine-37 in various tRNAs. This chain is tRNA (guanine-N(1)-)-methyltransferase, found in Hydrogenovibrio crunogenus (strain DSM 25203 / XCL-2) (Thiomicrospira crunogena).